The following is a 597-amino-acid chain: uncharacterized protein (597 aa).

In terms of domain architecture, PWWP spans 16–78 (VGRLVWVRRR…LENSKTVKAF (63 aa)). Disordered stretches follow at residues 126–210 (NLCN…MRGL) and 449–482 (QLKG…STPH). Residues 134–143 (EDSKRCLSGK) are compositionally biased toward basic and acidic residues. The span at 144 to 161 (EDEDSGSSDAEETEDDEL) shows a compositional bias: acidic residues. Residues 166-185 (EQLQSSISSQEMNNVGASKV) show a composition bias toward polar residues. Basic residues predominate over residues 450–460 (LKGKRNSRQMS). The span at 461–470 (KKQEERRNVY) shows a compositional bias: basic and acidic residues.

This is an uncharacterized protein from Arabidopsis thaliana (Mouse-ear cress).